The sequence spans 363 residues: Phospho-N-acetylmuramoyl-pentapeptide-transferase (363 aa).

10 helical membrane-spanning segments follow: residues 33–53, 82–102, 105–125, 133–153, 166–186, 198–218, 227–247, 271–291, 295–315, and 340–360; these read YAVLMGIALYAGFFFTYGVLP, GVIFVSVFVLLVYLLMRPSFV, LILLLTWGVMLTGYLDDCAQV, GALDFLFAVLTAALLGHFYFH, PVFVSPFLFFAGSVVILWMSI, LSGALVLMALLSMGTIFYFLL, LLVPFVVDGAQWALMSFALAG, ALGFFIGVLVLISGNPFLLLM, VILVNGGTGLLKVVLLRFFHV, and VLLRFMILQGLLTIGLLGVLF.

This sequence belongs to the glycosyltransferase 4 family. MraY subfamily. The cofactor is Mg(2+).

Its subcellular location is the cell inner membrane. The catalysed reaction is UDP-N-acetyl-alpha-D-muramoyl-L-alanyl-gamma-D-glutamyl-meso-2,6-diaminopimeloyl-D-alanyl-D-alanine + di-trans,octa-cis-undecaprenyl phosphate = di-trans,octa-cis-undecaprenyl diphospho-N-acetyl-alpha-D-muramoyl-L-alanyl-D-glutamyl-meso-2,6-diaminopimeloyl-D-alanyl-D-alanine + UMP. Its pathway is cell wall biogenesis; peptidoglycan biosynthesis. In terms of biological role, catalyzes the initial step of the lipid cycle reactions in the biosynthesis of the cell wall peptidoglycan: transfers peptidoglycan precursor phospho-MurNAc-pentapeptide from UDP-MurNAc-pentapeptide onto the lipid carrier undecaprenyl phosphate, yielding undecaprenyl-pyrophosphoryl-MurNAc-pentapeptide, known as lipid I. The chain is Phospho-N-acetylmuramoyl-pentapeptide-transferase from Treponema pallidum (strain Nichols).